The primary structure comprises 145 residues: Gene 34.1 protein (145 aa).

In terms of biological role, putative excisionase. This chain is Gene 34.1 protein (34.1), found in Mycobacterium (Mycobacteriophage D29).